The chain runs to 406 residues: MALYRNLYLLASLGLSSAAPSKVQRAPDSSIHARAVCTPTAGGDSSTDDVPAITEALSSCGNGGTIVFPEGSTYYLNSVLDLGSCSDCDIQVEGLLKFASDTDYWSGRTAMISVSNVDGLKLRSLTGSGVIDGNGQDAWDLFASDSSYSRPTLLYITGGSNLEISGLRQKNPPNVFNSVKGGATNVVFSNLKMDANSKSDNPPKNTDGFDIGESTYVTITEVTVVNDDDCVAFKPSSNYVTVDTISCTGSHGISVGSLGKSSDDSVKNIYVTGATMINSTKAAGIKTYPSGGDHGTSTVSNVTFNDFTVDNSDYAFQIQSCYGEDDDYCEENPGNAKLTDIVVSSFSGTTSDKYDPVVANLDCGADGTCGISISGFDVKAPSGKSEVLCANTPSDLGVTCTSGASG.

A signal peptide spans 1–18 (MALYRNLYLLASLGLSSA). PbH1 repeat units follow at residues 183 to 213 (ATNV…DIGE), 214 to 257 (STYV…SVGS), 266 to 289 (VKNI…KTYP), 299 to 320 (VSNV…QIQS), and 333 to 375 (PGNA…SISG). The Proton donor role is filled by aspartate 228. Residue histidine 251 is part of the active site. 2 N-linked (GlcNAc...) asparagine glycosylation sites follow: asparagine 278 and asparagine 301.

It belongs to the glycosyl hydrolase 28 family.

It is found in the secreted. In terms of biological role, pectinolytic enzyme involved in the degradation of xylogalacturonan (xga), a galacturonan backbone heavily substituted with xylose, and which is one important component of the hairy regions of pectin. Activity requires a galacturonic acid backbone substituted with xylose. The chain is Endo-xylogalacturonan hydrolase A (xghA) from Aspergillus tubingensis.